The chain runs to 321 residues: Protein ZAR1-like (321 aa).

The tract at residues 110–214 is disordered; the sequence is RTLSSCSPWD…GDAASEPLRR (105 aa). A compositionally biased stretch (basic and acidic residues) spans 145 to 154; the sequence is LRRDGDEAES. Residues 222–307 form a 3CxxC-type zinc finger; that stretch reads PKYGYFHCKD…QELCGRCKDK (86 aa).

This sequence belongs to the ZAR1 family. As to quaternary structure, interacts with YBX2.

The protein resides in the cytoplasm. It localises to the cytoplasmic ribonucleoprotein granule. Functionally, mRNA-binding protein required for maternal mRNA storage, translation and degradation during oocyte maturation. Probably promotes formation of some phase-separated membraneless compartment that stores maternal mRNAs in oocytes: acts by undergoing liquid-liquid phase separation upon binding to maternal mRNAs. Binds to the 3'-UTR of maternal mRNAs, inhibiting their translation. This is Protein ZAR1-like from Homo sapiens (Human).